Here is a 252-residue protein sequence, read N- to C-terminus: MLEIGKVERYIHEKLKKEKLHFVLLDPDDVSPETAGKIAEMSEAIGVDAIMVGGSTGAEGEVLDSVVRAIKESSSLPVILFPGSHGGISRYADAIFFMSLLNSRNPFFITGSQALGAFTVKRYGIEPIPMAYLIIEPGETVGWVGDAKPIPRHKPKIAAAYALAGQYLGMRLVYLEAGSGAPQPVPPEMIALVRKVIDVPLIVGGGIRTKEQARRAVEAGADIIVTGTAVEKAGSIEKARKKLEELNSGVKI.

Mg(2+) is bound by residues aspartate 26 and serine 55. Sn-glycerol 1-phosphate is bound by residues 174 to 180, 205 to 206, and 227 to 228; these read YLEAGSG, GG, and GT.

Belongs to the GGGP/HepGP synthase family. Group II subfamily. The cofactor is Mg(2+).

It is found in the cytoplasm. The catalysed reaction is sn-glycerol 1-phosphate + (2E,6E,10E)-geranylgeranyl diphosphate = sn-3-O-(geranylgeranyl)glycerol 1-phosphate + diphosphate. The protein operates within membrane lipid metabolism; glycerophospholipid metabolism. Its function is as follows. Prenyltransferase that catalyzes the transfer of the geranylgeranyl moiety of geranylgeranyl diphosphate (GGPP) to the C3 hydroxyl of sn-glycerol-1-phosphate (G1P). This reaction is the first ether-bond-formation step in the biosynthesis of archaeal membrane lipids. The chain is Geranylgeranylglyceryl phosphate synthase from Thermococcus gammatolerans (strain DSM 15229 / JCM 11827 / EJ3).